Consider the following 367-residue polypeptide: HTH-type transcriptional regulator GbdR (367 aa).

Positions 227-325 constitute an HTH araC/xylS-type domain; sequence QEIVALMEAN…GIPPRDERQG (99 aa). DNA-binding regions (H-T-H motif) lie at residues 244-265 and 292-315; these read DELAVYVNVSRRQLERLFQKYL and IIEVASVCGFVSTPHFSKCYREYF.

Its function is as follows. Specific regulator of choline metabolism, which activates transcription of at least 25 genes from 11 promoters in response to choline metabolites. Required for the induction of plcH, encoding the phospholipase C, and pchP, encoding the phosphorylcholine phosphatase, in response to glycine betaine (GB) and dimethylglycine (DMG). Also controls the expression of gbcAB and dgcAB, which are required for GB and DMG degradation, respectively, in response to both GB and DMG. The GbdR regulon also includes genes encoding sarcosine, glycine and serine catabolic enzymes, the BetX and CbcXWV quaternary amine transport proteins and the acetylcholine esterase gene, choE. Acts by binding directly to the promoter region of the genes. May play an important role during P.aeruginosa interactions with eukaryotes. The polypeptide is HTH-type transcriptional regulator GbdR (Pseudomonas aeruginosa (strain UCBPP-PA14)).